We begin with the raw amino-acid sequence, 914 residues long: Thyroid peroxidase (914 aa).

The signal sequence occupies residues 1–31 (MRTLGAMAIMLVVMGTVIFLSFILRSRDILC). The Extracellular segment spans residues 32–834 (GKTMKSHVIS…TCIDSGRLPR (803 aa)). An N-linked (GlcNAc...) asparagine glycan is attached at asparagine 123. The cysteines at positions 136 and 152 are disulfide-linked. Aspartate 232 is a binding site for heme b. The Proton acceptor role is filled by histidine 233. Aspartate 234 provides a ligand contact to Ca(2+). Intrachain disulfides connect cysteine 253–cysteine 263 and cysteine 257–cysteine 278. N-linked (GlcNAc...) asparagine glycosylation is found at asparagine 271 and asparagine 299. Ca(2+) is bound by residues threonine 313, phenylalanine 315, aspartate 317, and serine 319. An N-linked (GlcNAc...) asparagine glycan is attached at asparagine 334. Heme b is bound by residues glutamate 387 and histidine 482. 7 disulfides stabilise this stretch: cysteine 586–cysteine 643, cysteine 684–cysteine 709, cysteine 730–cysteine 770, cysteine 756–cysteine 782, cysteine 788–cysteine 802, cysteine 796–cysteine 811, and cysteine 813–cysteine 826. N-linked (GlcNAc...) asparagine glycosylation occurs at asparagine 603. In terms of domain architecture, Sushi spans 728 to 783 (DKCVFPEEVDNGNFVHCEESGKLVLVYSCFHGYKLQGQEQVTCTQKGWDSEPPVCK). Residues 784-827 (DVNECADLTHPPCHPSAQCKNTKGSFQCVCTDPYVLGEDEKTCI) form the EGF-like; calcium-binding domain. Residues 835 to 859 (ASWVSIALGALLIGGLASLTWIVIC) traverse the membrane as a helical segment. At 860 to 914 (RWTHADKKATLPITERVTTQSGCRKSQGRGISPHKAAAQDTGQEPASGSRVLLCE) the chain is on the cytoplasmic side. A disordered region spans residues 881–909 (GCRKSQGRGISPHKAAAQDTGQEPASGSR).

This sequence belongs to the peroxidase family. XPO subfamily. In terms of assembly, interacts with DUOX1, DUOX2 and CYBA. The cofactor is Ca(2+). Heme b is required as a cofactor. Heme is covalently bound through a H(2)O(2)-dependent autocatalytic process. Heme insertion is important for the delivery of protein at the cell surface. Post-translationally, cleaved in its N-terminal part.

The protein localises to the membrane. The enzyme catalyses 2 iodide + H2O2 + 2 H(+) = diiodine + 2 H2O. It carries out the reaction [thyroglobulin]-L-tyrosine + iodide + H2O2 + H(+) = [thyroglobulin]-3-iodo-L-tyrosine + 2 H2O. The catalysed reaction is [thyroglobulin]-3-iodo-L-tyrosine + iodide + H2O2 + H(+) = [thyroglobulin]-3,5-diiodo-L-tyrosine + 2 H2O. It catalyses the reaction 2 [thyroglobulin]-3,5-diiodo-L-tyrosine + H2O2 = [thyroglobulin]-L-thyroxine + [thyroglobulin]-dehydroalanine + 2 H2O. The enzyme catalyses [thyroglobulin]-3-iodo-L-tyrosine + [thyroglobulin]-3,5-diiodo-L-tyrosine + H2O2 = [thyroglobulin]-3,3',5-triiodo-L-thyronine + [thyroglobulin]-dehydroalanine + 2 H2O. It functions in the pathway hormone biosynthesis; thyroid hormone biosynthesis. Iodination and coupling of the hormonogenic tyrosines in thyroglobulin to yield the thyroid hormones T(3) and T(4). The sequence is that of Thyroid peroxidase (Tpo) from Mus musculus (Mouse).